The chain runs to 832 residues: Translation initiation factor IF-2 (832 aa).

The interval 1-244 (MSDTDGKKTL…KAMGGSQERE (244 aa)) is disordered. Residues 18–27 (TGQVKQSFSH) are compositionally biased toward polar residues. Basic and acidic residues predominate over residues 81–141 (KANESEEAER…EARKKAEADA (61 aa)). Residues 142–171 (SSKPAAARSKADDPATMDPAAAQAAEARGA) are compositionally biased toward low complexity. 2 stretches are compositionally biased toward basic and acidic residues: residues 178–201 (PRKERTADRAQPRKEQKGKGDDRR) and 227–244 (RKQERERRKAMGGSQERE). A tr-type G domain is found at 329–497 (PRPPVITVMG…SIALQAEILE (169 aa)). The tract at residues 338–345 (GHVDHGKT) is G1. 338–345 (GHVDHGKT) provides a ligand contact to GTP. The interval 363-367 (GITQH) is G2. A G3 region spans residues 385 to 388 (DTPG). GTP is bound by residues 385–389 (DTPGH) and 439–442 (NKID). Residues 439–442 (NKID) form a G4 region. A G5 region spans residues 475–477 (SAI).

This sequence belongs to the TRAFAC class translation factor GTPase superfamily. Classic translation factor GTPase family. IF-2 subfamily.

The protein resides in the cytoplasm. Its function is as follows. One of the essential components for the initiation of protein synthesis. Protects formylmethionyl-tRNA from spontaneous hydrolysis and promotes its binding to the 30S ribosomal subunits. Also involved in the hydrolysis of GTP during the formation of the 70S ribosomal complex. The chain is Translation initiation factor IF-2 from Dinoroseobacter shibae (strain DSM 16493 / NCIMB 14021 / DFL 12).